Reading from the N-terminus, the 218-residue chain is MHLNVVNLGRCEYEKALQVQIELLEKRQRGEIEDTLILVEHPPVITKGRHADETNIIGSEASLINHGIQLFNTDRGGDVTYHGPGQIVGYPIVNIRKSKIGVKKFVENLEEVLIRLLDEKYHITATRSSVNPGVWVGANKIAAIGLAVKRGVSMHGFALNVSTNLAHFKFLVPCGIADRGVTSIEEILGYPVDFHVANQHVLAYFSEVFNYDIIETVE.

Positions 30 to 213 constitute a BPL/LPL catalytic domain; it reads GEIEDTLILV…YFSEVFNYDI (184 aa). Substrate is bound by residues 75–82, 143–145, and 156–158; these read RGGDVTYH, AIG, and GFA. The active-site Acyl-thioester intermediate is cysteine 174.

This sequence belongs to the LipB family.

The protein resides in the cytoplasm. The enzyme catalyses octanoyl-[ACP] + L-lysyl-[protein] = N(6)-octanoyl-L-lysyl-[protein] + holo-[ACP] + H(+). Its pathway is protein modification; protein lipoylation via endogenous pathway; protein N(6)-(lipoyl)lysine from octanoyl-[acyl-carrier-protein]: step 1/2. Functionally, catalyzes the transfer of endogenously produced octanoic acid from octanoyl-acyl-carrier-protein onto the lipoyl domains of lipoate-dependent enzymes. Lipoyl-ACP can also act as a substrate although octanoyl-ACP is likely to be the physiological substrate. The sequence is that of Octanoyltransferase from Alkaliphilus metalliredigens (strain QYMF).